Consider the following 498-residue polypeptide: Zinc finger protein 497 (498 aa).

Residues 30–104 (SEGAVSGGWG…LRPSPLPEEP (75 aa)) are disordered. 14 consecutive C2H2-type zinc fingers follow at residues 106 to 128 (CRCG…RRVH), 134 to 156 (YTCP…QRIH), 162 to 184 (YACR…QETH), 190 to 212 (FRCP…RRTH), 218 to 240 (YECP…RRVH), 246 to 268 (HACR…LKIH), 274 to 296 (HACP…RRTH), 302 to 324 (FPCA…QRTH), 330 to 352 (FECA…RRVH), 358 to 380 (HACA…RRTH), 386 to 408 (FACA…RLSH), 414 to 436 (FACA…QRLH), 442 to 464 (FVCA…RRTH), and 470 to 492 (YACG…QKRH).

Belongs to the krueppel C2H2-type zinc-finger protein family.

It localises to the nucleus. Its function is as follows. May be involved in transcriptional regulation. This is Zinc finger protein 497 (ZNF497) from Homo sapiens (Human).